A 289-amino-acid polypeptide reads, in one-letter code: Pantothenate synthetase (289 aa).

30–37 serves as a coordination point for ATP; it reads MGYLHEGH. Catalysis depends on histidine 37, which acts as the Proton donor. Glutamine 61 serves as a coordination point for (R)-pantoate. Glutamine 61 is a binding site for beta-alanine. 147–150 contributes to the ATP binding site; sequence GLKD. Glutamine 153 lines the (R)-pantoate pocket. Residues valine 176 and 184 to 187 each bind ATP; that span reads KSSR.

Belongs to the pantothenate synthetase family. Homodimer.

It is found in the cytoplasm. It carries out the reaction (R)-pantoate + beta-alanine + ATP = (R)-pantothenate + AMP + diphosphate + H(+). The protein operates within cofactor biosynthesis; (R)-pantothenate biosynthesis; (R)-pantothenate from (R)-pantoate and beta-alanine: step 1/1. Catalyzes the condensation of pantoate with beta-alanine in an ATP-dependent reaction via a pantoyl-adenylate intermediate. The chain is Pantothenate synthetase from Geobacillus thermodenitrificans (strain NG80-2).